Reading from the N-terminus, the 408-residue chain is Imidazolonepropionase (408 aa).

The Fe(3+) site is built by His-73 and His-75. Positions 73 and 75 each coordinate Zn(2+). 4-imidazolone-5-propanoate contacts are provided by Arg-82, Tyr-145, and His-178. Residue Tyr-145 coordinates N-formimidoyl-L-glutamate. Position 243 (His-243) interacts with Fe(3+). His-243 is a binding site for Zn(2+). Residue Gln-246 participates in 4-imidazolone-5-propanoate binding. Residue Asp-318 coordinates Fe(3+). Asp-318 lines the Zn(2+) pocket. Residues Asn-320 and Gly-322 each contribute to the N-formimidoyl-L-glutamate site. A 4-imidazolone-5-propanoate-binding site is contributed by Ser-323.

Belongs to the metallo-dependent hydrolases superfamily. HutI family. Requires Zn(2+) as cofactor. It depends on Fe(3+) as a cofactor.

The protein localises to the cytoplasm. It catalyses the reaction 4-imidazolone-5-propanoate + H2O = N-formimidoyl-L-glutamate. Its pathway is amino-acid degradation; L-histidine degradation into L-glutamate; N-formimidoyl-L-glutamate from L-histidine: step 3/3. Its function is as follows. Catalyzes the hydrolytic cleavage of the carbon-nitrogen bond in imidazolone-5-propanoate to yield N-formimidoyl-L-glutamate. It is the third step in the universal histidine degradation pathway. This is Imidazolonepropionase from Shewanella baltica (strain OS195).